A 337-amino-acid polypeptide reads, in one-letter code: DNA-directed RNA polymerase subunit alpha (337 aa).

The tract at residues 1 to 233 (MVREKVTVST…DLFIPFLHAQ (233 aa)) is alpha N-terminal domain (alpha-NTD). Residues 267-337 (IALKYIFIDQ…FTVDLPKNKF (71 aa)) are alpha C-terminal domain (alpha-CTD).

It belongs to the RNA polymerase alpha chain family. As to quaternary structure, in plastids the minimal PEP RNA polymerase catalytic core is composed of four subunits: alpha, beta, beta', and beta''. When a (nuclear-encoded) sigma factor is associated with the core the holoenzyme is formed, which can initiate transcription.

Its subcellular location is the plastid. It is found in the chloroplast. It catalyses the reaction RNA(n) + a ribonucleoside 5'-triphosphate = RNA(n+1) + diphosphate. In terms of biological role, DNA-dependent RNA polymerase catalyzes the transcription of DNA into RNA using the four ribonucleoside triphosphates as substrates. This chain is DNA-directed RNA polymerase subunit alpha, found in Platanus occidentalis (Sycamore).